Consider the following 237-residue polypeptide: MADS-box protein GGM13 (237 aa).

The 61-residue stretch at 1 to 61 (MGRGKIEIKR…GKLFEYSSAS (61 aa)) folds into the MADS-box domain. Positions 84-174 (NQHLYCEMTR…CRLLAEQQAA (91 aa)) constitute a K-box domain.

As to expression, expression specific for female reproductive structures: strong at the adaxial base of the cupules, where ovules will later develop, then in the outermost cell layer of the nucellus, in the inner envelope, and in the inner half of the middle envelope at late stage of ovule development.

It localises to the nucleus. Functionally, probable transcription factor. The protein is MADS-box protein GGM13 (GGM13) of Gnetum gnemon (Spanish joint-fir).